A 652-amino-acid chain; its full sequence is Regulator of DNA class I crossover intermediates 1 (652 aa).

Positions 1–228 (MNWVGGSRSR…APYKRTNSSE (228 aa)) form a DNA-binding region, binds DNA containing a D-loop. Disordered stretches follow at residues 464–512 (YLES…KATE) and 621–652 (EKES…SNSL). Residues 467–477 (SSQSSQSASYS) are compositionally biased toward low complexity. Composition is skewed to polar residues over residues 478–491 (PRPT…STDL) and 639–652 (DTTG…SNSL).

In terms of assembly, interacts with MSH5. Interacts with TEX11. Expressed mainly in testis (at protein level). Expressed in spermatogonia and enriched in spermatocytes; absent in testicular somatic cells (at protein level). No expression or low levels in other tissues.

The protein localises to the chromosome. Functionally, involved in recombination, probably acting by stabilizing recombination intermediates during meiotic crossover formation. Required for normal germline development and fertility. Required for meiotic progression, complete chromosomal synapsis and crossover formation. Binds double-stranded DNA. However, also binds branched DNA molecules, such as those containing a D-loop or Holliday junction structure. Probably not required for formation of DNA double-strand breaks (DSBs). Also binds RNA in an RNA structure-independent manner, with a preference for binding 3'-UTR regions of mRNAs; may stabilize bound RNAs. This chain is Regulator of DNA class I crossover intermediates 1, found in Mus musculus (Mouse).